The chain runs to 86 residues: Antimicrobial peptide 2 (86 aa).

The first 25 residues, 1 to 25, serve as a signal peptide directing secretion; that stretch reads MVNMKCVALIVIVMMAFMMVDPSMG. 3 disulfide bridges follow: Cys29/Cys40, Cys34/Cys46, and Cys39/Cys53. One can recognise a Chitin-binding type-1 domain in the interval 29–53; that stretch reads CVRGRCPSGMCCSQFGYCGKGPKYC. The propeptide at 56–86 is removed in mature form; the sequence is ASTTVDHQADVAATKTAKNPTDAKLAGAGSP.

As to quaternary structure, homodimer.

Its function is as follows. Chitin-binding protein with a defensive function against numerous chitin containing fungal pathogens. It is also a potent inhibitor of Gram-positive bacteria. This chain is Antimicrobial peptide 2, found in Amaranthus caudatus (Love-lies-bleeding).